The chain runs to 432 residues: Enolase (432 aa).

Gln-167 contacts (2R)-2-phosphoglycerate. Glu-209 functions as the Proton donor in the catalytic mechanism. Mg(2+) contacts are provided by Asp-246, Glu-291, and Asp-318. (2R)-2-phosphoglycerate-binding residues include Lys-343, Arg-372, Ser-373, and Lys-394. The active-site Proton acceptor is Lys-343.

The protein belongs to the enolase family. In terms of assembly, component of the RNA degradosome, a multiprotein complex involved in RNA processing and mRNA degradation. Mg(2+) serves as cofactor.

The protein resides in the cytoplasm. It is found in the secreted. The protein localises to the cell surface. It catalyses the reaction (2R)-2-phosphoglycerate = phosphoenolpyruvate + H2O. It functions in the pathway carbohydrate degradation; glycolysis; pyruvate from D-glyceraldehyde 3-phosphate: step 4/5. Functionally, catalyzes the reversible conversion of 2-phosphoglycerate (2-PG) into phosphoenolpyruvate (PEP). It is essential for the degradation of carbohydrates via glycolysis. This is Enolase from Aliivibrio fischeri (strain MJ11) (Vibrio fischeri).